The primary structure comprises 426 residues: Serine--tRNA ligase (426 aa).

233–235 lines the L-serine pocket; it reads TSE. Position 264–266 (264–266) interacts with ATP; that stretch reads RSE. Glu-287 is a binding site for L-serine. Residue 351–354 coordinates ATP; that stretch reads EISS. Position 387 (Ser-387) interacts with L-serine.

It belongs to the class-II aminoacyl-tRNA synthetase family. Type-1 seryl-tRNA synthetase subfamily. Homodimer. The tRNA molecule binds across the dimer.

It is found in the cytoplasm. The catalysed reaction is tRNA(Ser) + L-serine + ATP = L-seryl-tRNA(Ser) + AMP + diphosphate + H(+). It catalyses the reaction tRNA(Sec) + L-serine + ATP = L-seryl-tRNA(Sec) + AMP + diphosphate + H(+). Its pathway is aminoacyl-tRNA biosynthesis; selenocysteinyl-tRNA(Sec) biosynthesis; L-seryl-tRNA(Sec) from L-serine and tRNA(Sec): step 1/1. In terms of biological role, catalyzes the attachment of serine to tRNA(Ser). Is also able to aminoacylate tRNA(Sec) with serine, to form the misacylated tRNA L-seryl-tRNA(Sec), which will be further converted into selenocysteinyl-tRNA(Sec). This is Serine--tRNA ligase from Colwellia psychrerythraea (strain 34H / ATCC BAA-681) (Vibrio psychroerythus).